The primary structure comprises 119 residues: Large ribosomal subunit protein bL20 (119 aa).

Belongs to the bacterial ribosomal protein bL20 family.

Binds directly to 23S ribosomal RNA and is necessary for the in vitro assembly process of the 50S ribosomal subunit. It is not involved in the protein synthesizing functions of that subunit. The polypeptide is Large ribosomal subunit protein bL20 (Streptococcus thermophilus (strain ATCC BAA-491 / LMD-9)).